The following is a 313-amino-acid chain: tRNA-cytidine(32) 2-sulfurtransferase (313 aa).

The short motif at 60-65 (SGGKDS) is the PP-loop motif element. The [4Fe-4S] cluster site is built by Cys135, Cys138, and Cys226.

Belongs to the TtcA family. In terms of assembly, homodimer. Mg(2+) is required as a cofactor. It depends on [4Fe-4S] cluster as a cofactor.

It is found in the cytoplasm. The enzyme catalyses cytidine(32) in tRNA + S-sulfanyl-L-cysteinyl-[cysteine desulfurase] + AH2 + ATP = 2-thiocytidine(32) in tRNA + L-cysteinyl-[cysteine desulfurase] + A + AMP + diphosphate + H(+). The protein operates within tRNA modification. In terms of biological role, catalyzes the ATP-dependent 2-thiolation of cytidine in position 32 of tRNA, to form 2-thiocytidine (s(2)C32). The sulfur atoms are provided by the cysteine/cysteine desulfurase (IscS) system. The protein is tRNA-cytidine(32) 2-sulfurtransferase of Delftia acidovorans (strain DSM 14801 / SPH-1).